The primary structure comprises 294 residues: Bidirectional sugar transporter SWEET13 (294 aa).

At 1–7 (MALTNNL) the chain is on the extracellular side. A helical membrane pass occupies residues 8 to 28 (WAFVFGILGNIISFVVFLAPV). Residues 10-97 (FVFGILGNII…VLFVSYANKK (88 aa)) form the MtN3/slv 1 domain. Residues 29-42 (PTFVRICKKKSTEG) are Cytoplasmic-facing. Residues 43 to 63 (FQSLPYVSALFSAMLWIYYAM) traverse the membrane as a helical segment. Residues 64–69 (QKDGTA) lie on the Extracellular side of the membrane. The chain crosses the membrane as a helical span at residues 70–90 (FLLITINAFGCVIETIYIVLF). The Cytoplasmic portion of the chain corresponds to 91–104 (VSYANKKTRISTLK). Residues 105–125 (VLGLLNFLGFAAIVLVCELLT) form a helical membrane-spanning segment. Residues 126-132 (KGSTREK) are Extracellular-facing. Residues 133–153 (VLGGICVGFSVSVFAAPLSIM) traverse the membrane as a helical segment. The 84-residue stretch at 133–216 (VLGGICVGFS…MILYIIFKYY (84 aa)) folds into the MtN3/slv 2 domain. Over 154–166 (RVVVRTRSVEFMP) the chain is Cytoplasmic. A helical transmembrane segment spans residues 167-187 (FSLSLFLTISAVTWLFYGLAI). At 188-192 (KDFYV) the chain is on the extracellular side. A helical membrane pass occupies residues 193-213 (ALPNVLGAFLGAVQMILYIIF). Over 214 to 294 (KYYKTPVAQK…NKDVQKQSQV (81 aa)) the chain is Cytoplasmic. The tract at residues 273 to 294 (KSQNMTDPKDQINKDVQKQSQV) is disordered. The segment covering 279-294 (DPKDQINKDVQKQSQV) has biased composition (basic and acidic residues).

This sequence belongs to the SWEET sugar transporter family. Forms heterooligomers with SWEET1, SWEET3, SWEET6, SWEET7, SWEET8, SWEET9, SWEET11 and SWEET17. Expressed at low levels in leaves.

Its subcellular location is the cell membrane. Its function is as follows. Mediates both low-affinity uptake and efflux of sugar across the plasma membrane. Involved in nurturing the male gametophyte. The sequence is that of Bidirectional sugar transporter SWEET13 from Arabidopsis thaliana (Mouse-ear cress).